The sequence spans 104 residues: Probable RNA-binding protein PA4753 (104 aa).

Positions 1 to 97 constitute a CRM domain; it reads MALTQEQKKQ…NPKPNKNLSN (97 aa).

This chain is Probable RNA-binding protein PA4753, found in Pseudomonas aeruginosa (strain ATCC 15692 / DSM 22644 / CIP 104116 / JCM 14847 / LMG 12228 / 1C / PRS 101 / PAO1).